Consider the following 199-residue polypeptide: Hematopoietic prostaglandin D synthase (199 aa).

Residues 2–79 enclose the GST N-terminal domain; sequence PNYKLLYFNM…YLTKNTDLAG (78 aa). Residues Y8, R14, W39, 49–51, and 63–64 each bind glutathione; these read GKI and QS. The GST C-terminal domain occupies 81 to 199; the sequence is TELEQCQVDA…WILKRPQTKL (119 aa).

This sequence belongs to the GST superfamily. Sigma family. As to quaternary structure, homodimer. Glutathione serves as cofactor. Highly expressed in spleen and bone marrow. Lower levels of expression in small intestine, colon, liver, pancreas and skin. Not detected in brain, heart, lung or kidney (at protein level).

Its subcellular location is the cytoplasm. It catalyses the reaction prostaglandin H2 = prostaglandin D2. The catalysed reaction is RX + glutathione = an S-substituted glutathione + a halide anion + H(+). It carries out the reaction 2-glyceryl-prostaglandin H2 = 2-glyceryl-prostaglandin D2. Bifunctional enzyme which catalyzes both the conversion of PGH2 to PGD2, a prostaglandin involved in smooth muscle contraction/relaxation and a potent inhibitor of platelet aggregation, and the conjugation of glutathione with a wide range of aryl halides and organic isothiocyanates. Also exhibits low glutathione-peroxidase activity towards cumene hydroperoxide. The polypeptide is Hematopoietic prostaglandin D synthase (Rattus norvegicus (Rat)).